The chain runs to 596 residues: Phosphomethylpyrimidine synthase 1 (596 aa).

Substrate is bound by residues Asn228, Met257, Tyr286, His322, 342–344 (SRG), 383–386 (DGLR), and Glu422. His426 lines the Zn(2+) pocket. Tyr449 provides a ligand contact to substrate. Residue His490 coordinates Zn(2+). Positions 570, 573, and 578 each coordinate [4Fe-4S] cluster.

The protein belongs to the ThiC family. As to quaternary structure, homodimer. Requires [4Fe-4S] cluster as cofactor.

The catalysed reaction is 5-amino-1-(5-phospho-beta-D-ribosyl)imidazole + S-adenosyl-L-methionine = 4-amino-2-methyl-5-(phosphooxymethyl)pyrimidine + CO + 5'-deoxyadenosine + formate + L-methionine + 3 H(+). It functions in the pathway cofactor biosynthesis; thiamine diphosphate biosynthesis. Functionally, catalyzes the synthesis of the hydroxymethylpyrimidine phosphate (HMP-P) moiety of thiamine from aminoimidazole ribotide (AIR) in a radical S-adenosyl-L-methionine (SAM)-dependent reaction. This is Phosphomethylpyrimidine synthase 1 from Syntrophotalea carbinolica (strain DSM 2380 / NBRC 103641 / GraBd1) (Pelobacter carbinolicus).